An 816-amino-acid polypeptide reads, in one-letter code: Transducer protein Htr18 (816 aa).

The next 2 helical transmembrane spans lie at 21-41 (VVIV…TQAV) and 282-302 (NIVV…LVIG). Positions 303–356 (RDALTALTDMSDRAEAIAAGDIDTAIEETTRIDEVGDLRRSFRDIQEYLQTVAG) constitute an HAMP 1 domain. The segment at 399-425 (DAQETAEQSRKEAEQSREEAEALAAAL) is disordered. The segment covering 405-418 (EQSRKEAEQSREEA) has biased composition (basic and acidic residues). In terms of domain architecture, HAMP 2 spans 423–476 (AALESQAQDIRETVEHAADGDLTQRLETDTDHESMAAIATALNSLLEELEGTIH). Residues 495–731 (SAEEVKRASG…EVVTMVDEVG (237 aa)) form the Methyl-accepting transducer domain. Residues 790 to 816 (GGAENTTGAFVRSASTDHSRDATHHDT) are disordered. Residues 793 to 803 (ENTTGAFVRSA) show a composition bias toward polar residues. Over residues 804–816 (STDHSRDATHHDT) the composition is skewed to basic and acidic residues.

Belongs to the methyl-accepting chemotaxis (MCP) protein family. Methylated by CheR.

The protein resides in the cell membrane. In terms of biological role, potentially involved in chemo- or phototactic signal transduction. The protein is Transducer protein Htr18 (htr18) of Halobacterium salinarum (strain ATCC 29341 / DSM 671 / R1).